The chain runs to 367 residues: Gibberellin 20 oxidase 3 (367 aa).

A Fe2OG dioxygenase domain is found at 198 to 304 (DGDPVMRLNH…RRSLTFFLNP (107 aa)). Tyr-208 is a binding site for 2-oxoglutarate. Residues His-223, Asp-225, and His-285 each coordinate Fe cation. 2 residues coordinate 2-oxoglutarate: Arg-295 and Ser-297.

This sequence belongs to the iron/ascorbate-dependent oxidoreductase family. Fe(2+) is required as a cofactor. The cofactor is L-ascorbate.

The catalysed reaction is gibberellin A12 + 2 2-oxoglutarate + 3 O2 + H(+) = gibberellin A9 + 2 succinate + 3 CO2 + 2 H2O. The enzyme catalyses gibberellin A53 + 2 2-oxoglutarate + 3 O2 + H(+) = gibberellin A20 + 2 succinate + 3 CO2 + 2 H2O. Its function is as follows. Key oxidase enzyme in the biosynthesis of gibberellin. Catalyzes the formation of bioactive gibberellins (GAs) via a three-step oxidation at C-20 of the GA skeleton. Controls the elongation of the vegetative shoot and plant height by the regulation of active gibberellin levels. This Oryza sativa subsp. japonica (Rice) protein is Gibberellin 20 oxidase 3.